The chain runs to 616 residues: Dihydroxy-acid dehydratase (616 aa).

Asp81 is a binding site for Mg(2+). Cys122 contributes to the [2Fe-2S] cluster binding site. Mg(2+) is bound by residues Asp123 and Lys124. Position 124 is an N6-carboxylysine (Lys124). Cys195 is a binding site for [2Fe-2S] cluster. Glu491 is a binding site for Mg(2+). Catalysis depends on Ser517, which acts as the Proton acceptor.

It belongs to the IlvD/Edd family. Homodimer. It depends on [2Fe-2S] cluster as a cofactor. Requires Mg(2+) as cofactor.

The enzyme catalyses (2R)-2,3-dihydroxy-3-methylbutanoate = 3-methyl-2-oxobutanoate + H2O. It carries out the reaction (2R,3R)-2,3-dihydroxy-3-methylpentanoate = (S)-3-methyl-2-oxopentanoate + H2O. The protein operates within amino-acid biosynthesis; L-isoleucine biosynthesis; L-isoleucine from 2-oxobutanoate: step 3/4. Its pathway is amino-acid biosynthesis; L-valine biosynthesis; L-valine from pyruvate: step 3/4. Functions in the biosynthesis of branched-chain amino acids. Catalyzes the dehydration of (2R,3R)-2,3-dihydroxy-3-methylpentanoate (2,3-dihydroxy-3-methylvalerate) into 2-oxo-3-methylpentanoate (2-oxo-3-methylvalerate) and of (2R)-2,3-dihydroxy-3-methylbutanoate (2,3-dihydroxyisovalerate) into 2-oxo-3-methylbutanoate (2-oxoisovalerate), the penultimate precursor to L-isoleucine and L-valine, respectively. This Escherichia coli (strain 55989 / EAEC) protein is Dihydroxy-acid dehydratase.